Consider the following 142-residue polypeptide: Hemoglobin subunit alpha-1 (142 aa).

The residue at position 1 (Ser1) is an N-acetylserine. Positions 1–142 (SLSDKDKAAV…VALALAERYR (142 aa)) constitute a Globin domain. His59 is a binding site for O2. Heme b is bound at residue His88.

This sequence belongs to the globin family. In terms of assembly, hb1 is a heterotetramer of two alpha-1 chains and two beta chains. HbC is a heterotetramer of two alpha-1 chains and two beta-C chains. Red blood cells.

In terms of biological role, involved in oxygen transport from gills to the various peripheral tissues. The polypeptide is Hemoglobin subunit alpha-1 (hba1) (Trematomus newnesi (Dusky notothen)).